The following is a 527-amino-acid chain: Bifunctional purine biosynthesis protein PurH (527 aa).

The 149-residue stretch at 1–149 (MASDFLPVHR…KNFARVAVAT (149 aa)) folds into the MGS-like domain.

It belongs to the PurH family.

The catalysed reaction is (6R)-10-formyltetrahydrofolate + 5-amino-1-(5-phospho-beta-D-ribosyl)imidazole-4-carboxamide = 5-formamido-1-(5-phospho-D-ribosyl)imidazole-4-carboxamide + (6S)-5,6,7,8-tetrahydrofolate. It carries out the reaction IMP + H2O = 5-formamido-1-(5-phospho-D-ribosyl)imidazole-4-carboxamide. The protein operates within purine metabolism; IMP biosynthesis via de novo pathway; 5-formamido-1-(5-phospho-D-ribosyl)imidazole-4-carboxamide from 5-amino-1-(5-phospho-D-ribosyl)imidazole-4-carboxamide (10-formyl THF route): step 1/1. It functions in the pathway purine metabolism; IMP biosynthesis via de novo pathway; IMP from 5-formamido-1-(5-phospho-D-ribosyl)imidazole-4-carboxamide: step 1/1. This is Bifunctional purine biosynthesis protein PurH from Xylella fastidiosa (strain 9a5c).